Here is a 637-residue protein sequence, read N- to C-terminus: 1-deoxy-D-xylulose-5-phosphate synthase (637 aa).

Thiamine diphosphate-binding positions include His88 and 129 to 131 (GHS). Mg(2+) is bound at residue Asp160. Thiamine diphosphate contacts are provided by residues 161–162 (GA), Asn189, Phe293, and Glu370. Asn189 is a binding site for Mg(2+).

This sequence belongs to the transketolase family. DXPS subfamily. In terms of assembly, homodimer. It depends on Mg(2+) as a cofactor. Requires thiamine diphosphate as cofactor.

The catalysed reaction is D-glyceraldehyde 3-phosphate + pyruvate + H(+) = 1-deoxy-D-xylulose 5-phosphate + CO2. It participates in metabolic intermediate biosynthesis; 1-deoxy-D-xylulose 5-phosphate biosynthesis; 1-deoxy-D-xylulose 5-phosphate from D-glyceraldehyde 3-phosphate and pyruvate: step 1/1. In terms of biological role, catalyzes the acyloin condensation reaction between C atoms 2 and 3 of pyruvate and glyceraldehyde 3-phosphate to yield 1-deoxy-D-xylulose-5-phosphate (DXP). The sequence is that of 1-deoxy-D-xylulose-5-phosphate synthase from Acinetobacter baumannii (strain AYE).